Here is a 658-residue protein sequence, read N- to C-terminus: Threonine--tRNA ligase (658 aa).

In terms of domain architecture, TGS spans 1–64 (MLNSVSLTFP…GKSGKVEIIT (64 aa)). The catalytic stretch occupies residues 246–549 (DHRKLGREMD…LIENYSGHFP (304 aa)). Positions 343, 394, and 526 each coordinate Zn(2+).

This sequence belongs to the class-II aminoacyl-tRNA synthetase family. As to quaternary structure, homodimer. Requires Zn(2+) as cofactor.

It localises to the cytoplasm. It catalyses the reaction tRNA(Thr) + L-threonine + ATP = L-threonyl-tRNA(Thr) + AMP + diphosphate + H(+). Its function is as follows. Catalyzes the attachment of threonine to tRNA(Thr) in a two-step reaction: L-threonine is first activated by ATP to form Thr-AMP and then transferred to the acceptor end of tRNA(Thr). Also edits incorrectly charged L-seryl-tRNA(Thr). This is Threonine--tRNA ligase from Mesorhizobium japonicum (strain LMG 29417 / CECT 9101 / MAFF 303099) (Mesorhizobium loti (strain MAFF 303099)).